A 231-amino-acid polypeptide reads, in one-letter code: dTTP/UTP pyrophosphatase (231 aa).

The active-site Proton acceptor is the D81.

Belongs to the Maf family. YhdE subfamily. The cofactor is a divalent metal cation.

It localises to the cytoplasm. The catalysed reaction is dTTP + H2O = dTMP + diphosphate + H(+). It catalyses the reaction UTP + H2O = UMP + diphosphate + H(+). In terms of biological role, nucleoside triphosphate pyrophosphatase that hydrolyzes dTTP and UTP. May have a dual role in cell division arrest and in preventing the incorporation of modified nucleotides into cellular nucleic acids. The sequence is that of dTTP/UTP pyrophosphatase from Lawsonia intracellularis (strain PHE/MN1-00).